The following is a 168-amino-acid chain: NADH-quinone oxidoreductase subunit B (168 aa).

[4Fe-4S] cluster-binding residues include cysteine 49, cysteine 50, cysteine 114, and cysteine 144.

The protein belongs to the complex I 20 kDa subunit family. In terms of assembly, NDH-1 is composed of 14 different subunits. Subunits NuoB, C, D, E, F, and G constitute the peripheral sector of the complex. Requires [4Fe-4S] cluster as cofactor.

It is found in the cell membrane. The enzyme catalyses a quinone + NADH + 5 H(+)(in) = a quinol + NAD(+) + 4 H(+)(out). In terms of biological role, NDH-1 shuttles electrons from NADH, via FMN and iron-sulfur (Fe-S) centers, to quinones in the respiratory chain. Couples the redox reaction to proton translocation (for every two electrons transferred, four hydrogen ions are translocated across the cytoplasmic membrane), and thus conserves the redox energy in a proton gradient. This is NADH-quinone oxidoreductase subunit B from Wolbachia sp. subsp. Brugia malayi (strain TRS).